The sequence spans 211 residues: Proteasome subunit beta (211 aa).

Positions 1–8 (MNQTLETG) are cleaved as a propeptide — removed in mature form; by autocatalysis. Catalysis depends on Thr-9, which acts as the Nucleophile.

Belongs to the peptidase T1B family. The 20S proteasome core is composed of 14 alpha and 14 beta subunits that assemble into four stacked heptameric rings, resulting in a barrel-shaped structure. The two inner rings, each composed of seven catalytic beta subunits, are sandwiched by two outer rings, each composed of seven alpha subunits. The catalytic chamber with the active sites is on the inside of the barrel. Has a gated structure, the ends of the cylinder being occluded by the N-termini of the alpha-subunits. Is capped at one or both ends by the proteasome regulatory ATPase, PAN.

It localises to the cytoplasm. The catalysed reaction is Cleavage of peptide bonds with very broad specificity.. The formation of the proteasomal ATPase PAN-20S proteasome complex, via the docking of the C-termini of PAN into the intersubunit pockets in the alpha-rings, triggers opening of the gate for substrate entry. Interconversion between the open-gate and close-gate conformations leads to a dynamic regulation of the 20S proteasome proteolysis activity. Component of the proteasome core, a large protease complex with broad specificity involved in protein degradation. The T.acidophilum proteasome is able to cleave oligopeptides after Tyr, Leu, Phe, and to a lesser extent after Glu and Arg. Thus, displays chymotrypsin-like activity and low level of caspase-like and trypsin-like activities. This is Proteasome subunit beta from Thermoplasma acidophilum (strain ATCC 25905 / DSM 1728 / JCM 9062 / NBRC 15155 / AMRC-C165).